The chain runs to 280 residues: MKNKDYPLRTSMDELSTKNDNEIDLEKGPLPEYNSEDGSTLPPYSDLNNPKQMGQNITKLFNWNKSTTPPDYDENRLPITDEGNNPPNTHRENHSSGTTDNSSPFLIKLLISFTSIILFNAPAVCYLKYKDAFFKNYGAAEWTLIGFWCASSLIIFTFSWYFYETWTKAVGKGIKHFLKKWRNIPMAFSEVFLFNILVGSPRVALRHISGERWGLKCSLADHIIFAILSILVFIVETVEPGSSKINIMKRLRGDNARDATQHVNEYTAVPLREMNPESEA.

Residues 1–29 (MKNKDYPLRTSMDELSTKNDNEIDLEKGP) show a composition bias toward basic and acidic residues. Disordered stretches follow at residues 1-49 (MKNK…DLNN) and 64-100 (NKSTTPPDYDENRLPITDEGNNPPNTHRENHSSGTTD). Helical transmembrane passes span 105–125 (FLIKLLISFTSIILFNAPAVC), 142–162 (WTLIGFWCASSLIIFTFSWYF), 184–204 (IPMAFSEVFLFNILVGSPRVA), and 218–238 (SLADHIIFAILSILVFIVETV).

The protein belongs to the WTF family. As to quaternary structure, homomer. Forms protein aggregates. The two isoforms can interact with each other and with themselves. High sequence similarity is required for their interaction.

The protein localises to the spore membrane. The protein resides in the vacuole membrane. Its subcellular location is the ascus epiplasm. It localises to the cytoplasm. It is found in the endoplasmic reticulum membrane. Its function is as follows. Promotes unequal transmission of alleles from the parental zygote to progeny spores by acting as poison/antidote system where the poison and antidote proteins are produced from the same locus; the poison component is trans-acting and targets all spores within an ascus whereas the antidote component is spore-specific, leading to poisoning of all progeny that do not inherit the allele. Localizes isoform 2 to the vacuole thereby facilitating its degradation. In terms of biological role, forms toxic aggregates that disrupt spore maturation. This is Meiotic driver wtf35 from Schizosaccharomyces pombe (Fission yeast).